A 743-amino-acid chain; its full sequence is Zinc finger CCHC domain-containing protein 8 (743 aa).

Residues 29–67 (DSEGEANDVQELVSQHEETINRLSAENQELKRRLSLLNR) adopt a coiled-coil conformation. A CCHC-type zinc finger spans residues 213–230 (PCCFNCGSEEHQMRDCPK). Disordered regions lie at residues 390–432 (YLTD…SAVM), 449–518 (KGYM…VLDE), 540–566 (GEST…SRTE), 600–649 (EGGP…EDSN), and 662–700 (NKLS…VPDV). The segment covering 399 to 413 (SSNKSNKRSSCQSSS) has biased composition (low complexity). Residues 455-504 (PPLPPGSPSYGTPPPLPRGTPPSTPPNFIPPPPPTPTPPPLPKGTPPPTP) are compositionally biased toward pro residues. 2 stretches are compositionally biased toward low complexity: residues 551-564 (TPIT…SPSR) and 601-637 (GGPL…GPLI). Residues 638 to 649 (PEEDSETNEDSN) are compositionally biased toward acidic residues. Residues 666–677 (SKHENASEKNPS) are compositionally biased toward basic and acidic residues.

The protein belongs to the ZCCHC8 family.

Its subcellular location is the nucleus. It localises to the nucleoplasm. In terms of biological role, scaffolding subunit of the trimeric nuclear exosome targeting (NEXT) complex that is involved in the surveillance and turnover of aberrant transcripts and non-coding RNAs. NEXT functions as an RNA exosome cofactor that directs a subset of non-coding short-lived RNAs for exosomal degradation. May be involved in pre-mRNA splicing. It is required for 3'-end maturation of telomerase RNA component (TERC), TERC 3'-end targeting to the nuclear RNA exosome, and for telomerase function. In Xenopus laevis (African clawed frog), this protein is Zinc finger CCHC domain-containing protein 8 (zcchc8).